A 620-amino-acid polypeptide reads, in one-letter code: MKMLLIHSDYLEFEAKEKTKIAEETENLKGKLDECLACFIAVEREDENNPEGTAIGAVEEIEKVANQLKVNNIVVYPYAHLSSDLSSPETAVKVLKDIESILKERGYNVLRAPFGWYKAFKISCKGHPLSELSRKIVAKEEKKEEGEESKFYLLNPETEEIIELNENNINIIKDEELLALAKHELGIREHKEHDEPPHVKFIKEKDICSYEEASDPGHFRWYPKGKLMRDLLADYVYNLVVNMGAMPVETPIMYDLGNPAIREHADKFGERQYRFRQGNKELMLRFAACFGQFMMKKDMYLLPRYLPLKLYELSTYSFRYEQRGELVGLKRLRCFTMPDMHTVCLNLEQAMEEFEKQFWECLKTGDDLNLSYSVIFRFTKDFFDEHRDWFFKIAKEYKNKYGKDVILEILPKRKHYWVGKVDIAVIDSLGRPIENPTVQIDVESAKRFDIKVHTNEGEIYPIILHCSPTGSIERVLCGLLEKAAIEAEKGNAPMLPVWLSPIQVRVIPVAERHYDYALKVAEKLRENNIRADFDDREESVSKKIRNAGKEWVPYVVVIGDEEMESDKLTVTIREKSTLKKPYKEKMTLDELIERIKKETANYPYRPLPLPIRCSLQPKFH.

The tract at residues 1-141 (MKMLLIHSDY…LSRKIVAKEE (141 aa)) is editing domain. Positions 197–496 (PHVKFIKEKD…AEKGNAPMLP (300 aa)) are catalytic. Cys289, His341, and His465 together coordinate Zn(2+).

The protein belongs to the class-II aminoacyl-tRNA synthetase family. As to quaternary structure, homodimer. Requires Zn(2+) as cofactor.

It localises to the cytoplasm. The enzyme catalyses tRNA(Thr) + L-threonine + ATP = L-threonyl-tRNA(Thr) + AMP + diphosphate + H(+). Its activity is regulated as follows. Not inhibited by 1 uM borrelidin (BN); probably does not bind BN. Functionally, catalyzes the attachment of threonine to tRNA(Thr) in a two-step reaction: L-threonine is first activated by ATP to form Thr-AMP and then transferred to the acceptor end of tRNA(Thr). Also activates L-serine, but does not detectably transfer it to tRNA(Thr). Edits incorrectly charged L-seryl-tRNA(Thr) via its editing domain. Has no activity on correctly acylated L-seryl-tRNA(Ser) or L-threonyl-tRNA(Thr). Deacylates correctly charged glycyl-tRNA(Gly), but not glycyl-tRNA(Gly)(2'-dA76) (the terminal 2'-OH of tRNA adenine 76 has been dehydroxylated) nor the 2'-fluoro tRNA derivative, strongly suggesting the editing function is tRNA catalyzed. The chain is Threonine--tRNA ligase from Methanocaldococcus jannaschii (strain ATCC 43067 / DSM 2661 / JAL-1 / JCM 10045 / NBRC 100440) (Methanococcus jannaschii).